The sequence spans 32 residues: Chlorophyll a-b binding protein 2, chloroplastic (32 aa).

Positions 19 and 22 each coordinate chlorophyll a. Residue arginine 24 coordinates chlorophyll b.

Belongs to the light-harvesting chlorophyll a/b-binding (LHC) protein family. The LHC complex consists of chlorophyll a-b binding proteins. Binds at least 14 chlorophylls (8 Chl-a and 6 Chl-b) and carotenoids such as lutein and neoxanthin. is required as a cofactor. Post-translationally, photoregulated by reversible phosphorylation of its threonine residues.

The protein localises to the plastid. It is found in the chloroplast thylakoid membrane. Its function is as follows. The light-harvesting complex (LHC) functions as a light receptor, it captures and delivers excitation energy to photosystems with which it is closely associated. The chain is Chlorophyll a-b binding protein 2, chloroplastic from Populus euphratica (Euphrates poplar).